Reading from the N-terminus, the 136-residue chain is Ubiquinol-cytochrome c reductase complex assembly factor 2 (136 aa).

A mitochondrion-targeting transit peptide spans 1–13 (MAALRYRRFLKLC).

Interacts with UQCC1. Forms a complex, named COMB/coordinator of mitochondrial CYTB biogenesis, composed of UQCC1, UQCC2, UQCC4, UQCC5 and UQCC6; stabilizes nascent cytochrome b/MT-CYB and promotes its membrane insertion. Forms a complex, named COMA, composed of UQCC1, UQCC2 and UQCC4; activates MT-CYB translation. Forms a complex, named COMC, composed of UQCC1, UQCC2; UQCC3 and UQCC4; mediates MT-CYB hemylation and association with the first nuclear-encoded CIII subunit UQCRQ. In terms of tissue distribution, widely expressed with highest levels in brain, liver, kidney, heart, skeletal muscle, thymus, testis and pancreas (at protein level).

The protein resides in the mitochondrion matrix. It is found in the mitochondrion nucleoid. Its subcellular location is the mitochondrion. It localises to the mitochondrion intermembrane space. The protein localises to the mitochondrion inner membrane. Required for the assembly of the ubiquinol-cytochrome c reductase complex (mitochondrial respiratory chain complex III or cytochrome b-c1 complex). Plays a role in the modulation of respiratory chain activities such as oxygen consumption and ATP production and via its modulation of the respiratory chain activity can regulate skeletal muscle differentiation and insulin secretion by pancreatic beta-cells. Involved in cytochrome b translation and/or stability. This Mus musculus (Mouse) protein is Ubiquinol-cytochrome c reductase complex assembly factor 2 (Uqcc2).